Here is a 252-residue protein sequence, read N- to C-terminus: Ubiquinone biosynthesis O-methyltransferase (252 aa).

Residues Arg-36, Gly-60, Asp-81, and Leu-123 each coordinate S-adenosyl-L-methionine.

The protein belongs to the methyltransferase superfamily. UbiG/COQ3 family.

The catalysed reaction is a 3-demethylubiquinol + S-adenosyl-L-methionine = a ubiquinol + S-adenosyl-L-homocysteine + H(+). The enzyme catalyses a 3-(all-trans-polyprenyl)benzene-1,2-diol + S-adenosyl-L-methionine = a 2-methoxy-6-(all-trans-polyprenyl)phenol + S-adenosyl-L-homocysteine + H(+). The protein operates within cofactor biosynthesis; ubiquinone biosynthesis. Its function is as follows. O-methyltransferase that catalyzes the 2 O-methylation steps in the ubiquinone biosynthetic pathway. In Rickettsia prowazekii (strain Madrid E), this protein is Ubiquinone biosynthesis O-methyltransferase.